The sequence spans 86 residues: Translation initiation factor IF-1 2 (86 aa).

Positions 1-72 (MAKEELLEME…SKGRITFRHI (72 aa)) constitute an S1-like domain.

The protein belongs to the IF-1 family. As to quaternary structure, component of the 30S ribosomal translation pre-initiation complex which assembles on the 30S ribosome in the order IF-2 and IF-3, IF-1 and N-formylmethionyl-tRNA(fMet); mRNA recruitment can occur at any time during PIC assembly.

The protein localises to the cytoplasm. One of the essential components for the initiation of protein synthesis. Stabilizes the binding of IF-2 and IF-3 on the 30S subunit to which N-formylmethionyl-tRNA(fMet) subsequently binds. Helps modulate mRNA selection, yielding the 30S pre-initiation complex (PIC). Upon addition of the 50S ribosomal subunit IF-1, IF-2 and IF-3 are released leaving the mature 70S translation initiation complex. The sequence is that of Translation initiation factor IF-1 2 from Polynucleobacter asymbioticus (strain DSM 18221 / CIP 109841 / QLW-P1DMWA-1) (Polynucleobacter necessarius subsp. asymbioticus).